A 134-amino-acid chain; its full sequence is Large-conductance mechanosensitive channel (134 aa).

2 consecutive transmembrane segments (helical) span residues 16–36 (VIDL…VTAL) and 81–101 (GDFL…FIIV).

Belongs to the MscL family. Homopentamer.

It localises to the cell inner membrane. In terms of biological role, channel that opens in response to stretch forces in the membrane lipid bilayer. May participate in the regulation of osmotic pressure changes within the cell. The sequence is that of Large-conductance mechanosensitive channel from Xylella fastidiosa (strain M12).